The primary structure comprises 270 residues: Putative carbamate hydrolase RutD (270 aa).

Belongs to the AB hydrolase superfamily. Hydrolase RutD family.

It carries out the reaction carbamate + 2 H(+) = NH4(+) + CO2. Involved in pyrimidine catabolism. May facilitate the hydrolysis of carbamate, a reaction that can also occur spontaneously. In Escherichia coli (strain SMS-3-5 / SECEC), this protein is Putative carbamate hydrolase RutD.